Reading from the N-terminus, the 303-residue chain is Cilia- and flagella-associated protein 161 (303 aa).

Microtubule inner protein component of sperm flagellar doublet microtubules.

The protein resides in the cytoplasm. It is found in the cytoskeleton. It localises to the cilium axoneme. Its subcellular location is the flagellum axoneme. Functionally, microtubule inner protein (MIP) part of the dynein-decorated doublet microtubules (DMTs) in cilia axoneme, which is required for motile cilia beating. In Mus musculus (Mouse), this protein is Cilia- and flagella-associated protein 161.